Here is a 345-residue protein sequence, read N- to C-terminus: Cysteinyl leukotriene receptor 2 (345 aa).

Over methionine 1 to proline 43 the chain is Extracellular. Residues asparagine 20 and asparagine 29 are each glycosylated (N-linked (GlcNAc...) asparagine). A helical transmembrane segment spans residues isoleucine 44–phenylalanine 64. Residues leucine 65–serine 73 lie on the Cytoplasmic side of the membrane. A helical membrane pass occupies residues valine 74–phenylalanine 94. The Extracellular portion of the chain corresponds to arginine 95–tyrosine 124. An intrachain disulfide couples cysteine 112 to cysteine 188. A helical transmembrane segment spans residues serine 125–phenylalanine 145. At arginine 146 to lysine 154 the chain is on the cytoplasmic side. The chain crosses the membrane as a helical span at residues asparagine 155–leucine 175. Residues lysine 176–valine 205 are Extracellular-facing. Residues asparagine 177 and asparagine 184 are each glycosylated (N-linked (GlcNAc...) asparagine). A helical membrane pass occupies residues alanine 206–isoleucine 226. At arginine 227–alanine 246 the chain is on the cytoplasmic side. A helical transmembrane segment spans residues leucine 247–leucine 267. The Extracellular portion of the chain corresponds to arginine 268–alanine 287. The helical transmembrane segment at valine 288–phenylalanine 308 threads the bilayer. Residues alanine 309 to valine 345 are Cytoplasmic-facing.

This sequence belongs to the G-protein coupled receptor 1 family.

Its subcellular location is the cell membrane. Its function is as follows. Receptor for cysteinyl leukotrienes. The response is mediated via a G-protein that activates a phosphatidylinositol-calcium second messenger system. This Sus scrofa (Pig) protein is Cysteinyl leukotriene receptor 2 (CYSLTR2).